We begin with the raw amino-acid sequence, 313 residues long: D-alanine--D-alanine ligase (313 aa).

The 201-residue stretch at 108 to 308 folds into the ATP-grasp domain; the sequence is KLVWQQLGIP…YQELVVKVLA (201 aa). 138-193 contributes to the ATP binding site; the sequence is VAKLGLPLFVKPASEGSSVAVIKVKTADALVPALEEAVKFDKIVVVEKSIEGGGEY. Mg(2+) is bound by residues Asp-262, Glu-275, and Asn-277.

It belongs to the D-alanine--D-alanine ligase family. Requires Mg(2+) as cofactor. The cofactor is Mn(2+).

The protein localises to the cytoplasm. It catalyses the reaction 2 D-alanine + ATP = D-alanyl-D-alanine + ADP + phosphate + H(+). Its pathway is cell wall biogenesis; peptidoglycan biosynthesis. Cell wall formation. The chain is D-alanine--D-alanine ligase from Paraburkholderia phymatum (strain DSM 17167 / CIP 108236 / LMG 21445 / STM815) (Burkholderia phymatum).